We begin with the raw amino-acid sequence, 427 residues long: BSD domain-containing protein 1 (427 aa).

2 positions are modified to phosphoserine: Ser92 and Ser166. Residues 146-198 enclose the BSD domain; the sequence is WLSEFCLEEKKGEISELLVGSPSIRALYTKMVPAAVSHSEFWHRYFYKVHQLE. The segment at 208-397 is disordered; the sequence is KQRADQSISE…ISEDWEKDFD (190 aa). The segment covering 219–229 has biased composition (acidic residues); the sequence is PGWEEEEEELE. Positions 236–245 are enriched in basic and acidic residues; the sequence is KEAKIPKETK. The segment covering 268 to 279 has biased composition (low complexity); the sequence is PAEATPSESSES. Residues 324–333 show a composition bias toward pro residues; the sequence is GPPPPPPSKP. Residues 347-364 show a composition bias toward basic and acidic residues; that stretch reads PPARVETLREEVPTDLRV. Thr353 bears the Phosphothreonine mark. The span at 368–387 shows a compositional bias: polar residues; that stretch reads NSDSGKSTPSNNGKKGSSTD. Phosphoserine is present on residues Ser384 and Ser385. Residues 388 to 397 show a composition bias toward acidic residues; it reads ISEDWEKDFD. Residue Ser415 is modified to Phosphoserine.

The chain is BSD domain-containing protein 1 (Bsdc1) from Mus musculus (Mouse).